Consider the following 561-residue polypeptide: Putative transport protein YbjL (561 aa).

Transmembrane regions (helical) follow at residues 8–28 (LLNG…LCLG), 32–52 (LGSV…LLGQ), 66–86 (FMLF…SIFF), 94–114 (MLAL…GKLF), and 158–178 (NLSL…IVGA). 2 consecutive RCK C-terminal domains span residues 200 to 288 (RGLD…SFRN) and 292 to 373 (VFDR…RIGF). 5 consecutive transmembrane segments (helical) span residues 383–403 (LLAF…TFQF), 406–426 (FSFG…LGFL), 447–467 (FGLM…INNG), 475–495 (MLIA…LFGA), and 540–560 (AIAN…WPGL).

This sequence belongs to the AAE transporter (TC 2.A.81) family. YbjL subfamily.

Its subcellular location is the cell membrane. The sequence is that of Putative transport protein YbjL from Salmonella paratyphi C (strain RKS4594).